A 158-amino-acid chain; its full sequence is Male-specific protein scotti (158 aa).

The tract at residues 24–43 is disordered; that stretch reads NVPDGNGDGDGDGDGDGNDA. The segment covering 30–42 has biased composition (acidic residues); that stretch reads GDGDGDGDGDGND.

This sequence belongs to the male-specific scotti family.

Functionally, post-meiotically transcribed gene that has a role in late spermiogenesis; required for actin cone progression during spermatid individualization. The protein is Male-specific protein scotti of Drosophila virilis (Fruit fly).